The sequence spans 234 residues: Melanoregulin (234 aa).

The disordered stretch occupies residues 215-234 (MNQNISGGEDEDEDESEPDD). Residues 222–234 (GEDEDEDESEPDD) show a composition bias toward acidic residues.

The protein belongs to the melanoregulin family.

It is found in the apical cell membrane. The protein localises to the melanosome membrane. The protein resides in the lysosome membrane. It localises to the cytoplasmic vesicle membrane. In terms of biological role, probably functions as a cargo-recognition protein that couples cytoplasmic vesicles to the transport machinery. Contributes to retrograde melanosome transport from the cell periphery to the center. Overexpression causes accumulation of late endosomes and/or lysosomes at the microtubule organising center (MTOC) at the center of the cell. Probably binds cholesterol and requires the presence of cholesterol in membranes to function in microtubule-mediated retrograde organelle transport. Binds phosphatidylinositol 3-phosphate, phosphatidylinositol 4-phosphate, phosphatidylinositol 5-phosphate and phosphatidylinositol 3,5-bisphosphate. This chain is Melanoregulin (mreg), found in Danio rerio (Zebrafish).